The sequence spans 157 residues: Endoribonuclease YbeY (157 aa).

Zn(2+) is bound by residues H116, H120, and H126.

This sequence belongs to the endoribonuclease YbeY family. The cofactor is Zn(2+).

It localises to the cytoplasm. Single strand-specific metallo-endoribonuclease involved in late-stage 70S ribosome quality control and in maturation of the 3' terminus of the 16S rRNA. The protein is Endoribonuclease YbeY of Renibacterium salmoninarum (strain ATCC 33209 / DSM 20767 / JCM 11484 / NBRC 15589 / NCIMB 2235).